We begin with the raw amino-acid sequence, 308 residues long: Aspartate carbamoyltransferase catalytic subunit (308 aa).

The carbamoyl phosphate site is built by R59 and T60. L-aspartate is bound at residue K87. Carbamoyl phosphate contacts are provided by R109, H139, and Q142. Residues R172 and R224 each contribute to the L-aspartate site. Positions 265 and 266 each coordinate carbamoyl phosphate.

The protein belongs to the aspartate/ornithine carbamoyltransferase superfamily. ATCase family. In terms of assembly, heterododecamer (2C3:3R2) of six catalytic PyrB chains organized as two trimers (C3), and six regulatory PyrI chains organized as three dimers (R2).

The catalysed reaction is carbamoyl phosphate + L-aspartate = N-carbamoyl-L-aspartate + phosphate + H(+). It participates in pyrimidine metabolism; UMP biosynthesis via de novo pathway; (S)-dihydroorotate from bicarbonate: step 2/3. Functionally, catalyzes the condensation of carbamoyl phosphate and aspartate to form carbamoyl aspartate and inorganic phosphate, the committed step in the de novo pyrimidine nucleotide biosynthesis pathway. The chain is Aspartate carbamoyltransferase catalytic subunit from Streptococcus thermophilus (strain ATCC BAA-491 / LMD-9).